Consider the following 493-residue polypeptide: MASGILVNVKEEVTCPICLELLTQPLSLDCGHSFCQACLTANHKKSTLDKGERSCPVCRVSYQPKNIRPNRHVANIVEKLREVKLSPEGQKVDHCARHGEKLLLFCKEDGKVICWLCERSQEHRGHHTFLTEEVAQKYQVKLQAALEMLRQKQQEAEELEADIREEKASWKTQIQYDKTSVLADFEQLRDILDWEESNELQNLEKEEEDILKSLTKSETEMVQQTQSVRELISDVEHRLQGSVMELLQGVDGVIKRMQNVTLKKPETFPKNQRRVFRAPNLKGMLEVFRELTDVRRYWVDVTVAPNDISYAVISEDMRQVSCPEPQIIYGAQGTTYQTYVNFNYCTGILGSQSITSGKHYWEVDVSKKSAWILGVCAGFQPDAMYNIEQNENYQPQYGYWVIGLEEGVKCSAFQDGSFHNPSAPFIVPLSVIICPDRVGVFLDYEACTVSFFNITNHGFLIYKFSHCSFSQPVFPYLNPRKCRVPMTLCSPSS.

Ala2 is modified (N-acetylalanine). The segment at 15-59 adopts an RING-type zinc-finger fold; it reads CPICLELLTQPLSLDCGHSFCQACLTANHKKSTLDKGERSCPVCR. The residue at position 86 (Ser86) is a Phosphoserine. Residues 90–132 form a B box-type zinc finger; the sequence is QKVDHCARHGEKLLLFCKEDGKVICWLCERSQEHRGHHTFLTE. Residues Cys95, His98, Cys117, and His123 each contribute to the Zn(2+) site. Positions 131–223 form a coiled coil; that stretch reads TEEVAQKYQV…LTKSETEMVQ (93 aa). Positions 185-198 are required for interaction with GABARAP and for autophagy; it reads FEQLRDILDWEESN. One can recognise a B30.2/SPRY domain in the interval 281–493; sequence LKGMLEVFRE…VPMTLCSPSS (213 aa).

It belongs to the TRIM/RBCC family. Can form homodimers and homotrimers. In addition to lower-order dimerization, also exhibits a higher-order multimerization and both low- and high-order multimerizations are essential for its restriction activity. Interacts with BTBD1 and BTBD2. Interacts with PSMC4, PSMC5, PSMD7 and HSPA8/HSC70. Interacts (via B30.2/SPRY domain) with HSPA1A/B. Interacts with PSMC2, MAP3K7/TAK1, TAB2 and TAB3. Interacts with SQSTM1. Interacts with TRIM6 and TRIM34. Interacts with ULK1 (phosphorylated form), GABARAP, GABARAPL1, GABARAPL2, MAP1LC3A, MAP1LC3C and BECN1. Degraded in a proteasome-independent fashion in the absence of viral infection but in a proteasome-dependent fashion following exposure to restriction sensitive virus. In terms of processing, autoubiquitinated in a RING finger- and UBE2D2-dependent manner. Monoubiquitinated by TRIM21. Deubiquitinated by Yersinia YopJ. Ubiquitination may not lead to proteasomal degradation.

It is found in the cytoplasm. The protein resides in the nucleus. It catalyses the reaction S-ubiquitinyl-[E2 ubiquitin-conjugating enzyme]-L-cysteine + [acceptor protein]-L-lysine = [E2 ubiquitin-conjugating enzyme]-L-cysteine + N(6)-ubiquitinyl-[acceptor protein]-L-lysine.. Its pathway is protein modification; protein ubiquitination. Capsid-specific restriction factor that prevents infection from non-host-adapted retroviruses. Blocks viral replication early in the life cycle, after viral entry but before reverse transcription. In addition to acting as a capsid-specific restriction factor, also acts as a pattern recognition receptor that activates innate immune signaling in response to the retroviral capsid lattice. Binding to the viral capsid triggers its E3 ubiquitin ligase activity, and in concert with the heterodimeric ubiquitin conjugating enzyme complex UBE2V1-UBE2N (also known as UBC13-UEV1A complex) generates 'Lys-63'-linked polyubiquitin chains, which in turn are catalysts in the autophosphorylation of the MAP3K7/TAK1 complex (includes TAK1, TAB2, and TAB3). Activation of the MAP3K7/TAK1 complex by autophosphorylation results in the induction and expression of NF-kappa-B and MAPK-responsive inflammatory genes, thereby leading to an innate immune response in the infected cell. Plays a role in regulating autophagy through activation of autophagy regulator BECN1 by causing its dissociation from its inhibitors BCL2 and TAB2. The chain is Tripartite motif-containing protein 5 (TRIM5) from Pongo pygmaeus (Bornean orangutan).